The sequence spans 181 residues: Ribosome maturation factor RimM (181 aa).

In terms of domain architecture, PRC barrel spans 100-177 (EEGFYWMQLI…QIQVDWQLED (78 aa)).

The protein belongs to the RimM family. In terms of assembly, binds ribosomal protein uS19.

It localises to the cytoplasm. In terms of biological role, an accessory protein needed during the final step in the assembly of 30S ribosomal subunit, possibly for assembly of the head region. Essential for efficient processing of 16S rRNA. May be needed both before and after RbfA during the maturation of 16S rRNA. It has affinity for free ribosomal 30S subunits but not for 70S ribosomes. This Hydrogenovibrio crunogenus (strain DSM 25203 / XCL-2) (Thiomicrospira crunogena) protein is Ribosome maturation factor RimM.